A 579-amino-acid polypeptide reads, in one-letter code: YTH domain-containing family protein 2 (579 aa).

Residues 1 to 45 form a disordered region; that stretch reads MSASSLLEQRPKGQGNKVQNGSVHQKDGLNDDDFEPYLSPQARPN. Position 2 is an N-acetylserine (Ser2). Ser2, Ser4, Ser5, Ser22, Ser39, and Ser196 each carry phosphoserine. Positions 2-384 are localization to mRNA processing bodies (P-bodies); the sequence is SASSLLEQRP…QAGSGSTPSE (383 aa). The interval 247–387 is disordered; it reads AKQQPKLKTK…SGSTPSEPHP (141 aa). Polar residues predominate over residues 291 to 316; that stretch reads ALVQNIGQPTQGSPQPVGQQANNSPP. A compositionally biased stretch (low complexity) spans 337–349; it reads AQLSVQQQAAQPT. Ser359 is subject to Phosphoserine. Gly residues predominate over residues 359 to 371; the sequence is SGFGHNGVDGNGV. Positions 372–383 are enriched in polar residues; it reads GQSQAGSGSTPS. The segment at 385–579 is interaction with m6A-containing mRNAs; that stretch reads PHPVLEKLRS…VKKERQGRGK (195 aa). Ser394 carries the phosphoserine modification. The YTH domain maps to 410-544; it reads GRVFIIKSYS…EKAKQVLKII (135 aa). RNA-binding positions include 416–418, Asp422, 432–433, Asn462, Trp486, and Trp491; these read KSY and WC.

Belongs to the YTHDF family. YTHDF2 subfamily. In terms of assembly, interacts with CNOT1; interaction is direct and promotes recruitment of the CCR4-NOT complex. Interacts with YTHDF3. Interacts with RIDA/HRSP12; interaction leads to recruitment of the ribonuclease P/MRP complex. In terms of processing, ubiquitinated by the SCF(SKP2) complex, leading to its degradation. Widely expressed, with highest expression in testis.

It localises to the cytoplasm. The protein resides in the cytosol. It is found in the P-body. Its subcellular location is the stress granule. The protein localises to the nucleus. Specifically recognizes and binds N6-methyladenosine (m6A)-containing RNAs, and regulates their stability. M6A is a modification present at internal sites of mRNAs and some non-coding RNAs and plays a role in mRNA stability and processing. Acts as a regulator of mRNA stability by promoting degradation of m6A-containing mRNAs via interaction with the CCR4-NOT and ribonuclease P/MRP complexes, depending on the context. The YTHDF paralogs (YTHDF1, YTHDF2 and YTHDF3) share m6A-containing mRNAs targets and act redundantly to mediate mRNA degradation and cellular differentiation. M6A-containing mRNAs containing a binding site for RIDA/HRSP12 (5'-GGUUC-3') are preferentially degraded by endoribonucleolytic cleavage: cooperative binding of RIDA/HRSP12 and YTHDF2 to transcripts leads to recruitment of the ribonuclease P/MRP complex. Other m6A-containing mRNAs undergo deadenylation via direct interaction between YTHDF2 and CNOT1, leading to recruitment of the CCR4-NOT and subsequent deadenylation of m6A-containing mRNAs. Required maternally to regulate oocyte maturation: probably acts by binding to m6A-containing mRNAs, thereby regulating maternal transcript dosage during oocyte maturation, which is essential for the competence of oocytes to sustain early zygotic development. Also required during spermatogenesis: regulates spermagonial adhesion by promoting degradation of m6A-containing transcripts coding for matrix metallopeptidases. Also involved in hematopoietic stem cells specification by binding to m6A-containing mRNAs, leading to promote their degradation. Also acts as a regulator of neural development by promoting m6A-dependent degradation of neural development-related mRNA targets. Inhibits neural specification of induced pluripotent stem cells by binding to methylated neural-specific mRNAs and promoting their degradation, thereby restraining neural differentiation. Regulates circadian regulation of hepatic lipid metabolism: acts by promoting m6A-dependent degradation of PPARA transcripts. Regulates the innate immune response to infection by inhibiting the type I interferon response: acts by binding to m6A-containing IFNB transcripts and promoting their degradation. May also act as a promoter of cap-independent mRNA translation following heat shock stress: upon stress, relocalizes to the nucleus and specifically binds mRNAs with some m6A methylation mark at their 5'-UTR, protecting demethylation of mRNAs by FTO, thereby promoting cap-independent mRNA translation. Regulates mitotic entry by promoting the phase-specific m6A-dependent degradation of WEE1 transcripts. Promotes formation of phase-separated membraneless compartments, such as P-bodies or stress granules, by undergoing liquid-liquid phase separation upon binding to mRNAs containing multiple m6A-modified residues: polymethylated mRNAs act as a multivalent scaffold for the binding of YTHDF proteins, juxtaposing their disordered regions and thereby leading to phase separation. The resulting mRNA-YTHDF complexes then partition into different endogenous phase-separated membraneless compartments, such as P-bodies, stress granules or neuronal RNA granules. May also recognize and bind RNAs modified by C5-methylcytosine (m5C) and act as a regulator of rRNA processing. This chain is YTH domain-containing family protein 2, found in Mus musculus (Mouse).